The chain runs to 444 residues: Glutamate--tRNA ligase 1 (444 aa).

The short motif at Pro-10–Asn-20 is the 'HIGH' region element. The 'KMSKS' region motif lies at Gly-241–Arg-245. An ATP-binding site is contributed by Lys-244.

The protein belongs to the class-I aminoacyl-tRNA synthetase family. Glutamate--tRNA ligase type 1 subfamily. As to quaternary structure, monomer.

It localises to the cytoplasm. It carries out the reaction tRNA(Glu) + L-glutamate + ATP = L-glutamyl-tRNA(Glu) + AMP + diphosphate. Its function is as follows. Catalyzes the attachment of glutamate to tRNA(Glu) in a two-step reaction: glutamate is first activated by ATP to form Glu-AMP and then transferred to the acceptor end of tRNA(Glu). The sequence is that of Glutamate--tRNA ligase 1 from Rhodospirillum rubrum (strain ATCC 11170 / ATH 1.1.1 / DSM 467 / LMG 4362 / NCIMB 8255 / S1).